A 1561-amino-acid polypeptide reads, in one-letter code: Synemin (1561 aa).

The head stretch occupies residues 1-10; it reads MLSWRLQTGS. The tract at residues 11-49 is coil 1A; the sequence is EKAELQELNARLYDYVCRVRELERENLLLEEELRSRLSR. The segment at 11–320 is interaction with DMD and UTRN; sequence EKAELQELNA…YRALLEGESN (310 aa). Residues 11 to 322 enclose the IF rod domain; it reads EKAELQELNA…ALLEGESNPE (312 aa). A linker 1 region spans residues 50 to 58; that stretch reads EDRWAEDQA. The interval 59–163 is coil 1B; the sequence is LYAEEARSLR…DLRARAASLT (105 aa). Positions 164 to 186 are linker 12; it reads MHFRARATSPAAPPPRLRDVHDS. Residues 187–300 are coil 2; sequence YALLVAESWR…LRDYQELLQV (114 aa). Residues 301-1561 form a tail region; it reads KTGLSLEVAT…EEEEEGEGWF (1261 aa). Composition is skewed to polar residues over residues 371-390 and 401-421; these read SSAS…TTAV and SRHS…KTIS. Disordered regions lie at residues 371 to 421, 549 to 574, and 591 to 637; these read SSAS…KTIS, DARK…RSVK, and EVST…DSTT. Residues 601 to 624 show a composition bias toward basic and acidic residues; the sequence is GRKDVSHSGGREAETKETRFRLDT. Polar residues predominate over residues 625 to 637; that stretch reads QDTASSLQSDSTT. Position 653 is a phosphothreonine (threonine 653). Phosphoserine is present on residues serine 655, serine 778, serine 780, serine 1044, serine 1049, serine 1077, serine 1087, serine 1179, and serine 1182. 2 disordered regions span residues 1033–1061 and 1075–1099; these read SVVR…VPAG and SPSG…QGPV. Residues 1086–1099 show a composition bias toward polar residues; the sequence is VSPSSDQRVTQGPV. The tract at residues 1152 to 1453 is interaction with TLN1 and VCL; that stretch reads VSGDFSEAVS…GPKETSFTFQ (302 aa). A disordered region spans residues 1212-1231; that stretch reads ADISGSGRMPGSERSHTEKE. Residues 1222–1231 show a composition bias toward basic and acidic residues; the sequence is GSERSHTEKE. An interaction with DMD and UTRN region spans residues 1242–1557; sequence AQVGGNFATE…DNEEEEEEEG (316 aa). Position 1425 is a phosphoserine (serine 1425). Position 1481 is an omega-N-methylarginine (arginine 1481). The segment at 1491–1519 is disordered; sequence DERVASTGSGASPGDAHQAPGEKGTEQAG.

The protein belongs to the intermediate filament family. As to quaternary structure, interacts with DES, DMD, DTNA, TLN1, UTRN and VCL. Isoform 1 and isoform 2 interact with GFAP and VIM. In terms of tissue distribution, isoform 2 and isoform 3 are detected in adult skeletal muscle, heart and bladder, whereas isoform 1 is only detected in adult bladder (at protein level).

Its subcellular location is the cytoplasm. It localises to the cytoskeleton. The protein localises to the cell junction. It is found in the adherens junction. Functionally, type-VI intermediate filament (IF) which plays an important cytoskeletal role within the muscle cell cytoskeleton. It forms heteromeric IFs with desmin and/or vimentin, and via its interaction with cytoskeletal proteins alpha-dystrobrevin, dystrophin, talin-1, utrophin and vinculin, is able to link these heteromeric IFs to adherens-type junctions, such as to the costameres, neuromuscular junctions, and myotendinous junctions within striated muscle cells. The sequence is that of Synemin from Mus musculus (Mouse).